A 297-amino-acid chain; its full sequence is Coatomer subunit epsilon-2 (297 aa).

The protein belongs to the COPE family. As to quaternary structure, oligomeric complex that consists of at least the alpha, beta, beta', gamma, delta, epsilon and zeta subunits.

The protein resides in the cytoplasm. Its subcellular location is the golgi apparatus membrane. It is found in the cytoplasmic vesicle. The protein localises to the COPI-coated vesicle membrane. Functionally, the coatomer is a cytosolic protein complex that binds to dilysine motifs and reversibly associates with Golgi non-clathrin-coated vesicles, which further mediate biosynthetic protein transport from the ER, via the Golgi up to the trans Golgi network. The coatomer complex is required for budding from Golgi membranes, and is essential for the retrograde Golgi-to-ER transport of dilysine-tagged proteins. The protein is Coatomer subunit epsilon-2 of Oryza sativa subsp. indica (Rice).